A 109-amino-acid chain; its full sequence is uncharacterized protein (109 aa).

A helical transmembrane segment spans residues Y78–I98.

The protein resides in the membrane. This is an uncharacterized protein from Saccharomyces cerevisiae (strain ATCC 204508 / S288c) (Baker's yeast).